The sequence spans 305 residues: Protoheme IX farnesyltransferase (305 aa).

Transmembrane regions (helical) follow at residues 31–51 (VMSL…YSVH), 52–72 (PFIA…AGAI), 96–118 (VIES…FFMA), 123–145 (LLAS…IWLK), 151–171 (NIVI…AAVS), 179–199 (IILF…LALF), 225–245 (ILIY…IGMN), 247–267 (FIYL…AGSL), and 281–301 (FAYS…TNTI).

This sequence belongs to the UbiA prenyltransferase family. Protoheme IX farnesyltransferase subfamily.

Its subcellular location is the cell inner membrane. It carries out the reaction heme b + (2E,6E)-farnesyl diphosphate + H2O = Fe(II)-heme o + diphosphate. It functions in the pathway porphyrin-containing compound metabolism; heme O biosynthesis; heme O from protoheme: step 1/1. Converts heme B (protoheme IX) to heme O by substitution of the vinyl group on carbon 2 of heme B porphyrin ring with a hydroxyethyl farnesyl side group. This Rickettsia rickettsii (strain Iowa) protein is Protoheme IX farnesyltransferase.